Consider the following 91-residue polypeptide: uncharacterized protein (91 aa).

The chain crosses the membrane as a helical span at residues 50 to 70; it reads FGFFGGPFIGGLAGGLIGSAL.

It localises to the cell membrane. This is an uncharacterized protein from Bacillus subtilis (strain 168).